We begin with the raw amino-acid sequence, 321 residues long: Phospho-N-acetylmuramoyl-pentapeptide-transferase (321 aa).

10 helical membrane passes run 1–21 (MIFIYAIIALLITFILVPILI), 50–70 (MGGLTFLISIIITSIIAIIFV), 76–96 (IILLLFVTIGFGLIGFIDDYI), 112–132 (FLAQIIIAVIFFVLSDVFHLV), 140–160 (IPFVNFDIPLSFAYVIFIVFW), 176–196 (GLATGLSIIGFAMYAVMSYML), 200–220 (AIGIFCIIMIFALLGFLPYNL), 225–245 (VFMGDTGSLALGGIFATISIM), 250–270 (LSLILIGFVFVVETLSVMLQV), and 300–320 (VVTVFWTVGLITGLIGLWIGV).

This sequence belongs to the glycosyltransferase 4 family. MraY subfamily. It depends on Mg(2+) as a cofactor.

It localises to the cell membrane. It catalyses the reaction UDP-N-acetyl-alpha-D-muramoyl-L-alanyl-gamma-D-glutamyl-L-lysyl-D-alanyl-D-alanine + di-trans,octa-cis-undecaprenyl phosphate = Mur2Ac(oyl-L-Ala-gamma-D-Glu-L-Lys-D-Ala-D-Ala)-di-trans,octa-cis-undecaprenyl diphosphate + UMP. Its pathway is cell wall biogenesis; peptidoglycan biosynthesis. Functionally, catalyzes the initial step of the lipid cycle reactions in the biosynthesis of the cell wall peptidoglycan: transfers peptidoglycan precursor phospho-MurNAc-pentapeptide from UDP-MurNAc-pentapeptide onto the lipid carrier undecaprenyl phosphate, yielding undecaprenyl-pyrophosphoryl-MurNAc-pentapeptide, known as lipid I. In Staphylococcus epidermidis (strain ATCC 35984 / DSM 28319 / BCRC 17069 / CCUG 31568 / BM 3577 / RP62A), this protein is Phospho-N-acetylmuramoyl-pentapeptide-transferase.